The primary structure comprises 505 residues: uncharacterized protein (505 aa).

Residues Cys-193–Arg-440 form the Radical SAM core domain. Positions 208, 216, and 219 each coordinate [4Fe-4S] cluster. A TRAM domain is found at Lys-435–Lys-499.

[4Fe-4S] cluster is required as a cofactor.

This is an uncharacterized protein from Methanocaldococcus jannaschii (strain ATCC 43067 / DSM 2661 / JAL-1 / JCM 10045 / NBRC 100440) (Methanococcus jannaschii).